Consider the following 142-residue polypeptide: MAKKVQAYVKLQVAAGMANPSPPVGPALGQQGVNIMEFCKAFNARTESLEKGLPIPVVITVYADRSFTFITKTPPAAVLLKKAAGIKSGSGKPNKDKVGKVTLEQVRQIAETKAADMTGSSIETKMKSIAGTARSMGLVVEE.

Belongs to the universal ribosomal protein uL11 family. As to quaternary structure, part of the ribosomal stalk of the 50S ribosomal subunit. Interacts with L10 and the large rRNA to form the base of the stalk. L10 forms an elongated spine to which L12 dimers bind in a sequential fashion forming a multimeric L10(L12)X complex. Post-translationally, one or more lysine residues are methylated.

Forms part of the ribosomal stalk which helps the ribosome interact with GTP-bound translation factors. The polypeptide is Large ribosomal subunit protein uL11 (Pasteurella multocida (strain Pm70)).